Here is a 328-residue protein sequence, read N- to C-terminus: Formimidoylglutamase (328 aa).

Positions 133, 159, 161, 163, 253, and 255 each coordinate Mn(2+).

The protein belongs to the arginase family. Mn(2+) serves as cofactor.

The catalysed reaction is N-formimidoyl-L-glutamate + H2O = formamide + L-glutamate. It participates in amino-acid degradation; L-histidine degradation into L-glutamate; L-glutamate from N-formimidoyl-L-glutamate (hydrolase route): step 1/1. Catalyzes the conversion of N-formimidoyl-L-glutamate to L-glutamate and formamide. This chain is Formimidoylglutamase, found in Streptococcus pyogenes serotype M28 (strain MGAS6180).